The primary structure comprises 377 residues: Queuine tRNA-ribosyltransferase (377 aa).

Catalysis depends on aspartate 94, which acts as the Proton acceptor. Residues 94–98, aspartate 148, glutamine 191, and glycine 218 each bind substrate; that span reads DSGGF. The segment at 249-255 is RNA binding; that stretch reads GVGTPDD. Aspartate 268 (nucleophile) is an active-site residue. The RNA binding; important for wobble base 34 recognition stretch occupies residues 273 to 277; the sequence is TRAGR.

Belongs to the queuine tRNA-ribosyltransferase family. In terms of assembly, homodimer. Within each dimer, one monomer is responsible for RNA recognition and catalysis, while the other monomer binds to the replacement base PreQ1.

The enzyme catalyses 7-aminomethyl-7-carbaguanine + guanosine(34) in tRNA = 7-aminomethyl-7-carbaguanosine(34) in tRNA + guanine. The protein operates within tRNA modification; tRNA-queuosine biosynthesis. Functionally, catalyzes the base-exchange of a guanine (G) residue with the queuine precursor 7-aminomethyl-7-deazaguanine (PreQ1) at position 34 (anticodon wobble position) in tRNAs with GU(N) anticodons (tRNA-Asp, -Asn, -His and -Tyr). Catalysis occurs through a double-displacement mechanism. The nucleophile active site attacks the C1' of nucleotide 34 to detach the guanine base from the RNA, forming a covalent enzyme-RNA intermediate. The proton acceptor active site deprotonates the incoming PreQ1, allowing a nucleophilic attack on the C1' of the ribose to form the product. After dissociation, two additional enzymatic reactions on the tRNA convert PreQ1 to queuine (Q), resulting in the hypermodified nucleoside queuosine (7-(((4,5-cis-dihydroxy-2-cyclopenten-1-yl)amino)methyl)-7-deazaguanosine). This chain is Queuine tRNA-ribosyltransferase, found in Brucella suis biovar 1 (strain 1330).